Reading from the N-terminus, the 341-residue chain is Holliday junction branch migration complex subunit RuvB (341 aa).

A large ATPase domain (RuvB-L) region spans residues 1–180; it reads MAKSHTLNPE…FGIQLRLDYY (180 aa). The ATP site is built by L19, R20, G61, K64, T65, T66, R170, Y180, and R217. T65 serves as a coordination point for Mg(2+). The interval 181-251 is small ATPAse domain (RuvB-S); sequence NDEEMKEIVL…LCLKAFEKMG (71 aa). Residues 254 to 341 form a head domain (RuvB-H) region; that stretch reads DLGLDGMDRQ…ENHGQDPTLF (88 aa). Residues R309 and R314 each coordinate DNA.

The protein belongs to the RuvB family. In terms of assembly, homohexamer. Forms an RuvA(8)-RuvB(12)-Holliday junction (HJ) complex. HJ DNA is sandwiched between 2 RuvA tetramers; dsDNA enters through RuvA and exits via RuvB. An RuvB hexamer assembles on each DNA strand where it exits the tetramer. Each RuvB hexamer is contacted by two RuvA subunits (via domain III) on 2 adjacent RuvB subunits; this complex drives branch migration. In the full resolvosome a probable DNA-RuvA(4)-RuvB(12)-RuvC(2) complex forms which resolves the HJ.

It is found in the cytoplasm. It catalyses the reaction ATP + H2O = ADP + phosphate + H(+). Functionally, the RuvA-RuvB-RuvC complex processes Holliday junction (HJ) DNA during genetic recombination and DNA repair, while the RuvA-RuvB complex plays an important role in the rescue of blocked DNA replication forks via replication fork reversal (RFR). RuvA specifically binds to HJ cruciform DNA, conferring on it an open structure. The RuvB hexamer acts as an ATP-dependent pump, pulling dsDNA into and through the RuvAB complex. RuvB forms 2 homohexamers on either side of HJ DNA bound by 1 or 2 RuvA tetramers; 4 subunits per hexamer contact DNA at a time. Coordinated motions by a converter formed by DNA-disengaged RuvB subunits stimulates ATP hydrolysis and nucleotide exchange. Immobilization of the converter enables RuvB to convert the ATP-contained energy into a lever motion, pulling 2 nucleotides of DNA out of the RuvA tetramer per ATP hydrolyzed, thus driving DNA branch migration. The RuvB motors rotate together with the DNA substrate, which together with the progressing nucleotide cycle form the mechanistic basis for DNA recombination by continuous HJ branch migration. Branch migration allows RuvC to scan DNA until it finds its consensus sequence, where it cleaves and resolves cruciform DNA. The chain is Holliday junction branch migration complex subunit RuvB from Leptospira borgpetersenii serovar Hardjo-bovis (strain JB197).